The following is a 133-amino-acid chain: Small ribosomal subunit protein uS8 (133 aa).

The protein belongs to the universal ribosomal protein uS8 family. As to quaternary structure, part of the 30S ribosomal subunit. Contacts proteins S5 and S12.

In terms of biological role, one of the primary rRNA binding proteins, it binds directly to 16S rRNA central domain where it helps coordinate assembly of the platform of the 30S subunit. This Acaryochloris marina (strain MBIC 11017) protein is Small ribosomal subunit protein uS8.